The sequence spans 214 residues: Small ribosomal subunit protein eS6 (214 aa).

Belongs to the eukaryotic ribosomal protein eS6 family.

The polypeptide is Small ribosomal subunit protein eS6 (rps6e) (Saccharolobus islandicus (strain Y.G.57.14 / Yellowstone #1) (Sulfolobus islandicus)).